The sequence spans 225 residues: UPF0173 metal-dependent hydrolase PYRAB05000 (225 aa).

The protein belongs to the UPF0173 family.

In Pyrococcus abyssi (strain GE5 / Orsay), this protein is UPF0173 metal-dependent hydrolase PYRAB05000.